The chain runs to 324 residues: GTPase Era (324 aa).

In terms of domain architecture, Era-type G spans 31-199; the sequence is KSGFIGIIGR…QELLVEHLEH (169 aa). The segment at 39–46 is G1; it reads GRPNVGKS. GTP is bound at residue 39–46; the sequence is GRPNVGKS. A G2 region spans residues 65–69; the sequence is QTTRN. The G3 stretch occupies residues 86–89; the sequence is DTPG. Residues 86-90 and 148-151 contribute to the GTP site; these read DTPGI and NKVD. The segment at 148 to 151 is G4; it reads NKVD. Residues 178–180 form a G5 region; that stretch reads FSA. A KH type-2 domain is found at 230 to 306; that stretch reads TREEVPHSVA…YLELFVKVQP (77 aa).

This sequence belongs to the TRAFAC class TrmE-Era-EngA-EngB-Septin-like GTPase superfamily. Era GTPase family. In terms of assembly, monomer.

Its subcellular location is the cytoplasm. It is found in the cell inner membrane. In terms of biological role, an essential GTPase that binds both GDP and GTP, with rapid nucleotide exchange. Plays a role in 16S rRNA processing and 30S ribosomal subunit biogenesis and possibly also in cell cycle regulation and energy metabolism. The chain is GTPase Era from Nostoc sp. (strain PCC 7120 / SAG 25.82 / UTEX 2576).